A 222-amino-acid chain; its full sequence is Orotate phosphoribosyltransferase (222 aa).

Residue Lys29 coordinates 5-phospho-alpha-D-ribose 1-diphosphate. 37 to 38 is a binding site for orotate; it reads FF. 5-phospho-alpha-D-ribose 1-diphosphate contacts are provided by residues 75 to 76, Arg101, Lys102, Lys105, His107, and 126 to 134; these read YK and DDVISAGTS. Orotate contacts are provided by Ser130 and Arg158.

It belongs to the purine/pyrimidine phosphoribosyltransferase family. PyrE subfamily. As to quaternary structure, homodimer. Mg(2+) is required as a cofactor.

The enzyme catalyses orotidine 5'-phosphate + diphosphate = orotate + 5-phospho-alpha-D-ribose 1-diphosphate. Its pathway is pyrimidine metabolism; UMP biosynthesis via de novo pathway; UMP from orotate: step 1/2. In terms of biological role, catalyzes the transfer of a ribosyl phosphate group from 5-phosphoribose 1-diphosphate to orotate, leading to the formation of orotidine monophosphate (OMP). This Polynucleobacter asymbioticus (strain DSM 18221 / CIP 109841 / QLW-P1DMWA-1) (Polynucleobacter necessarius subsp. asymbioticus) protein is Orotate phosphoribosyltransferase.